The primary structure comprises 883 residues: Coatomer subunit gamma (883 aa).

The tract at residues 1 to 25 is disordered; that stretch reads MNYFSLTSHKKHRGHPSAGPSNAYQ. 6 HEAT repeats span residues 69–106, 292–329, 331–364, 365–401, 404–439, and 476–513; these read REAT…IAED, RMLS…THPA, VTTC…GAES, SVER…KYPR, TVLM…ENAD, and ATPS…SCPA.

Belongs to the COPG family. In terms of assembly, oligomeric complex that consists of at least the alpha, beta, beta', gamma, delta, epsilon and zeta subunits. As to expression, expressed in ovary, testis, testis tip, young spermatocytes, germ cells and follicle cells. Up-regulated expression within centrally to posteriorly located germarial cysts and in migrating follicle cells. Widespread expression in imaginal disks including eye-antennal disk, wing disk, third leg and haltere disk.

The protein localises to the cytoplasm. Its subcellular location is the golgi apparatus membrane. It localises to the cytoplasmic vesicle. It is found in the COPI-coated vesicle membrane. The protein resides in the endoplasmic reticulum. In terms of biological role, the coatomer is a cytosolic protein complex that binds to dilysine motifs and reversibly associates with Golgi non-clathrin-coated vesicles, which further mediate biosynthetic protein transport from the ER, via the Golgi up to the trans Golgi network. Coatomer complex is required for budding from Golgi membranes, and is essential for the retrograde Golgi-to-ER transport of dilysine-tagged proteins. Required for limiting lipid storage in lipid droplets. Involved in the expansion of luminal extracellular matrices and apical membrane during tubulogenesis. Required in the tracheal epithelium for luminal protein secretion and diametric tube growth. In salivary glands, required for deposition of O-glycans and luminal extracellular matrix assembly. Required for epidermal morphogenesis and cuticle development. This is Coatomer subunit gamma from Drosophila melanogaster (Fruit fly).